The primary structure comprises 128 residues: Fluoride-specific ion channel FluC (128 aa).

The next 4 membrane-spanning stretches (helical) occupy residues 5 to 25 (IVAIFVGAGLGALLRWFLSIG), 35 to 55 (LGTLVSNLIGGYLIGIAVVAF), 67 to 87 (LFVITGFMGGLTTFSTYSVEV), and 96 to 116 (FGWALAVAALHLIGSFTLTGL). Na(+)-binding residues include Gly-75 and Thr-78.

This sequence belongs to the fluoride channel Fluc/FEX (TC 1.A.43) family.

The protein localises to the cell inner membrane. It catalyses the reaction fluoride(in) = fluoride(out). With respect to regulation, na(+) is not transported, but it plays an essential structural role and its presence is essential for fluoride channel function. Fluoride-specific ion channel. Important for reducing fluoride concentration in the cell, thus reducing its toxicity. The chain is Fluoride-specific ion channel FluC from Burkholderia thailandensis (strain ATCC 700388 / DSM 13276 / CCUG 48851 / CIP 106301 / E264).